The following is a 496-amino-acid chain: Ganglioside-induced differentiation-associated protein 2 (496 aa).

Positions 25 to 48 (EEGEDVPDGGRKDVPDGGSHSPFP) are disordered. One can recognise a Macro domain in the interval 44–224 (HSPFPYRKDI…TYRRLLPLYF (181 aa)). Residues 329-483 (DLSDIAALKA…FVLDYDAREN (155 aa)) enclose the CRAL-TRIO domain.

The protein belongs to the GDAP2 family.

This is Ganglioside-induced differentiation-associated protein 2 from Xenopus laevis (African clawed frog).